Consider the following 105-residue polypeptide: Urease subunit beta (105 aa).

It belongs to the urease beta subunit family. In terms of assembly, heterotrimer of UreA (gamma), UreB (beta) and UreC (alpha) subunits. Three heterotrimers associate to form the active enzyme.

Its subcellular location is the cytoplasm. It carries out the reaction urea + 2 H2O + H(+) = hydrogencarbonate + 2 NH4(+). It participates in nitrogen metabolism; urea degradation; CO(2) and NH(3) from urea (urease route): step 1/1. The sequence is that of Urease subunit beta from Pseudomonas putida (strain ATCC 47054 / DSM 6125 / CFBP 8728 / NCIMB 11950 / KT2440).